The sequence spans 548 residues: 5-epi-aristolochene synthase 3 (548 aa).

Residues aspartate 301, aspartate 305, aspartate 444, threonine 448, and glutamate 452 each contribute to the Mg(2+) site. Residues 301-305 (DDTFD) carry the DDXXD motif motif.

This sequence belongs to the terpene synthase family. As to quaternary structure, monomer. The cofactor is Mg(2+). In terms of tissue distribution, expressed in roots, but not in shoots.

It is found in the cytoplasm. It carries out the reaction (2E,6E)-farnesyl diphosphate = (+)-5-epi-aristolochene + diphosphate. It functions in the pathway secondary metabolite biosynthesis; terpenoid biosynthesis. Its function is as follows. Catalyzes the cyclization of trans,trans-farnesyl diphosphate (FPP) to the bicyclic intermediate 5-epi-aristolochene, initial step in the conversion of FPP to the sesquiterpenoid antifungal phytoalexin capsidiol. Produces germacrene A as an enzyme-bound intermediate that is not released by the enzyme, but is further cyclized to produce the bicyclic 5-epi-aristolochene. The protein is 5-epi-aristolochene synthase 3 of Nicotiana attenuata (Coyote tobacco).